Consider the following 409-residue polypeptide: Threonine dehydratase-like protein AKTS1-1 (409 aa).

Positions Met1 to Arg21 are disordered. At Lys111 the chain carries N6-(pyridoxal phosphate)lysine. Residues Asn138, Gly239 to Leu243, and Ser368 each bind pyridoxal 5'-phosphate.

This sequence belongs to the serine/threonine dehydratase family. Pyridoxal 5'-phosphate serves as cofactor.

Its pathway is mycotoxin biosynthesis. Functionally, threonine dehydratase-like protein; part of the gene clusters that mediate the biosynthesis of the host-selective toxins (HSTs) AK-toxins responsible for Japanese pear black spot disease by the Japanese pear pathotype. AK-toxins are esters of 9,10-epoxy 8-hydroxy 9-methyldecatrienoic acid (EDA). On cellular level, AK-toxins affect plasma membrane of susceptible cells and cause a sudden increase in loss of K(+) after a few minutes of toxin treatment. The acyl-CoA ligase AKT1, the hydrolase AKT2 and enoyl-CoA hydratase AKT3 are all involved in the biosynthesis of the AK-, AF- and ACT-toxin common 9,10-epoxy-8-hydroxy-9-methyl-decatrienoic acid (EDA) structural moiety. Part of the EDA biosynthesis occurs in the peroxisome since these 3 enzymes are localized in peroxisomes. The exact roles of the 3 enzymes, as well as of additional AK-toxin clusters enzymes, including AKT4, AKT6 and AKTS1, have still to be elucidated. The Cytochrome P450 monooxygenase AKT7 on the other side functions to limit production of EDA and AK-toxin, probably via the catalysis of a side reaction of EDA or its precursor. In Alternaria alternata (Alternaria rot fungus), this protein is Threonine dehydratase-like protein AKTS1-1.